Consider the following 375-residue polypeptide: Delta(12) fatty acid dehydrogenase (375 aa).

The next 2 helical transmembrane spans lie at 54 to 74 and 77 to 97; these read IIAY…PAPL and LAWP…WVIG. The Histidine box-1 signature appears at 98–102; that stretch reads HECGH. The helical transmembrane segment at 110-130 threads the bilayer; it reads WVDDTVGFILHSFLMTPYFSW. The Histidine box-2 motif lies at 134–138; sequence HRNHH. The next 3 helical transmembrane spans lie at 172–192, 218–238, and 242–262; these read LLIM…TNIS, VLLS…AVAA, and AWVT…FDII. The short motif at 308-312 is the Histidine box-3 element; the sequence is HVMHH.

This sequence belongs to the fatty acid desaturase type 1 family. The cofactor is Fe cation. As to expression, seed.

It localises to the membrane. The enzyme catalyses a (9Z,12Z)-octadecadienoyl-containing glycerolipid + 2 Fe(II)-[cytochrome b5] + O2 + 2 H(+) = a (9Z)-octadec-9-en-12-ynoyl-containing glycerolipid + 2 Fe(III)-[cytochrome b5] + 2 H2O. It functions in the pathway lipid metabolism; polyunsaturated fatty acid biosynthesis. Changes the delta-12 double bond of linoleic acid into a triple bond in the biosynthesis of crepenynic acid. The sequence is that of Delta(12) fatty acid dehydrogenase from Crepis alpina (Hawksbeard).